The chain runs to 260 residues: Eukaryotic translation initiation factor 3 subunit G-2 (260 aa).

The region spanning 180–258 (CAVRISNLSE…LILSVEWSKP (79 aa)) is the RRM domain.

This sequence belongs to the eIF-3 subunit G family. In terms of assembly, component of the eukaryotic translation initiation factor 3 (eIF-3) complex. The eIF-3 complex interacts with pix.

Its subcellular location is the cytoplasm. In terms of biological role, RNA-binding component of the eukaryotic translation initiation factor 3 (eIF-3) complex, which is involved in protein synthesis of a specialized repertoire of mRNAs and, together with other initiation factors, stimulates binding of mRNA and methionyl-tRNAi to the 40S ribosome. The eIF-3 complex specifically targets and initiates translation of a subset of mRNAs involved in cell proliferation. This subunit can bind 18S rRNA. In Drosophila grimshawi (Hawaiian fruit fly), this protein is Eukaryotic translation initiation factor 3 subunit G-2.